Consider the following 458-residue polypeptide: E3 ubiquitin-protein ligase RNF25 (458 aa).

Positions 18–128 (SEVEVLESIY…EKGKEILTDN (111 aa)) constitute an RWD domain. The Zn(2+) site is built by Cys135, Cys138, Cys153, His155, Cys161, Cys197, and Cys200. Residues 135–201 (CVICLYGFQE…AVGVQCPVCR (67 aa)) form an RING-type zinc finger. Disordered regions lie at residues 267–299 (PPAP…TSAT) and 317–458 (KTPG…EDGS). 2 stretches are compositionally biased toward polar residues: residues 282 to 299 (GSHQ…TSAT) and 362 to 372 (LKGTSDTQKLQ). Basic and acidic residues-rich tracts occupy residues 377-388 (PLKESMDLKPES) and 412-423 (RTRDCAHWERAK). The segment covering 432 to 443 (PRLPRGRGAYRP) has biased composition (low complexity).

This sequence belongs to the RNF25 family. Interacts with UBE2D2, and may also interact with UBE2E1 and UBE2E3. Interacts with RELA/p65. Post-translationally, ubiquitinated; autoubiquitinated.

Its subcellular location is the cytoplasm. The catalysed reaction is S-ubiquitinyl-[E2 ubiquitin-conjugating enzyme]-L-cysteine + [acceptor protein]-L-lysine = [E2 ubiquitin-conjugating enzyme]-L-cysteine + N(6)-ubiquitinyl-[acceptor protein]-L-lysine.. It participates in protein modification; protein ubiquitination. Functionally, E3 ubiquitin-protein ligase that plays a key role in the RNF14-RNF25 translation quality control pathway, a pathway that takes place when a ribosome has stalled during translation, and which promotes ubiquitination and degradation of translation factors on stalled ribosomes. Catalyzes ubiquitination of RPS27A in response to ribosome collisions, promoting activation of RNF14. RNF25 catalyzes ubiquitination of other ribosomal proteins on stalled ribosomes, such as RPL0, RPL1, RPL12, RPS13 and RPS17. Also involved in ubiquitination and degradation of stalled ETF1/eRF1. Independently of its function in the response to stalled ribosomes, mediates ubiquitination and subsequent proteasomal degradation of NKD2. May also stimulate transcription mediated by NF-kappa-B via its interaction with RELA/p65. This chain is E3 ubiquitin-protein ligase RNF25 (RNF25), found in Bos taurus (Bovine).